Reading from the N-terminus, the 594-residue chain is Beta-mannosyltransferase 3 (594 aa).

The Cytoplasmic portion of the chain corresponds to 1–6 (MRIRSN). Residues 7–27 (VLLLSTAGALALVWFAVVFSW) traverse the membrane as a helical segment. Residues 28–594 (DDKSIFGIPT…KDEVKDTKAK (567 aa)) lie on the Extracellular side of the membrane. A glycan (N-linked (GlcNAc...) asparagine) is linked at N305. A coiled-coil region spans residues 512-594 (VTRGEEDRLK…KDEVKDTKAK (83 aa)). Basic and acidic residues predominate over residues 517–558 (EDRLKNKEKERKIEEKRKKEEERKKKEEEKKKKEEEEKKKKE). A disordered region spans residues 517-564 (EDRLKNKEKERKIEEKRKKEEERKKKEEEKKKKEEEEKKKKEEEEEEE).

This sequence belongs to the BMT family.

It is found in the membrane. In terms of biological role, beta-mannosyltransferase involved in cell wall biosynthesis. This chain is Beta-mannosyltransferase 3 (BMT3), found in Komagataella phaffii (strain ATCC 76273 / CBS 7435 / CECT 11047 / NRRL Y-11430 / Wegner 21-1) (Yeast).